The chain runs to 569 residues: Proline--tRNA ligase (569 aa).

The protein belongs to the class-II aminoacyl-tRNA synthetase family. ProS type 1 subfamily. Homodimer.

It localises to the cytoplasm. It carries out the reaction tRNA(Pro) + L-proline + ATP = L-prolyl-tRNA(Pro) + AMP + diphosphate. Its function is as follows. Catalyzes the attachment of proline to tRNA(Pro) in a two-step reaction: proline is first activated by ATP to form Pro-AMP and then transferred to the acceptor end of tRNA(Pro). As ProRS can inadvertently accommodate and process non-cognate amino acids such as alanine and cysteine, to avoid such errors it has two additional distinct editing activities against alanine. One activity is designated as 'pretransfer' editing and involves the tRNA(Pro)-independent hydrolysis of activated Ala-AMP. The other activity is designated 'posttransfer' editing and involves deacylation of mischarged Ala-tRNA(Pro). The misacylated Cys-tRNA(Pro) is not edited by ProRS. This chain is Proline--tRNA ligase, found in Legionella pneumophila (strain Paris).